Consider the following 906-residue polypeptide: MSQQTTIRKLAELVNTPVDKLLVQLAEAGMKFSGPDQVVTSTEKMKLLGFLRRTHGKAETPAEAASEAAKKITLNRRKLQEVTVSAGRTKTTVNVEVRQKRTYVKSENEGSGRATPMTPDEERADILAKLAASRQRNLDEQQRLAESDRVRDEEIQRKRDEEQAAKDRAEAERKAAEEAAAAASAPAPAPVAAAPTPSAAAPAARAPSSPSSAPRPSRPGGASPASRPSTPARPDDRNNAAKHKTRGSHVMVAGVEDDDATKRFAGQLHLSAADRARRSNVRGKPTGRPGSSSSRRGNDNGRGSNQANSGPHGFERPTAPVVREVAIGETITVADLAQKLALKGGDVVKALFKMGVMATITQSIDHDTAALVTEELGHKAVRADNADFEDALLAHAEDAQGDTTTRPPVVTIMGHVDHGKTSLLDYIRRTKIASGEAGGITQHIGAYHVETDRGVISFLDTPGHAAFTSMRARGAKITDIVVLVVAADDGVMPQTKEAVAHAKAAGVPLIVAVNKIDKAGADPLRVKNELLAENVVAEDFGGDTQFIEVSAKVGTGVDTLLDAISLQAEVLELKAVAEGRASGTVIESSLDKGRGPVATVLVQQGALKRGDYLVCGIQYGRVRALFDETGHQPGSAGPSIPVQVLGLSGVPEAGDDFVVVDDERLAKDVAQQRETKRRESRLVASATNRMEDILAQMGKGEGQQVLNLVIKADVQGSVEALKQSLVALSNEDIRINVIHSGVGGITESDANSAAASKATIIGFNVRADASARKIVESNGVDLRYFSIIYDVIDQVKQVASGLLGVEIREEIMGIAQVRDVFRSSKFGAVAGCMIIEGVVKRSKPIRVLRDSVVVFEGELESLRRFKENVDEVRNGNECGIGVKAYNDVKAGDQIECFERIEVARTL.

Disordered stretches follow at residues R134 to V250 and H269 to P317. The segment covering R136–E177 has biased composition (basic and acidic residues). Low complexity-rich tracts occupy residues E178–A232 and G287–N305. The tr-type G domain maps to T405–K574. Positions G414–T421 are G1. G414 to T421 serves as a coordination point for GTP. The interval G439–H443 is G2. Positions D460–G463 are G3. GTP is bound by residues D460–H464 and N514–D517. Positions N514–D517 are G4. A G5 region spans residues S550–K552.

The protein belongs to the TRAFAC class translation factor GTPase superfamily. Classic translation factor GTPase family. IF-2 subfamily.

It is found in the cytoplasm. Functionally, one of the essential components for the initiation of protein synthesis. Protects formylmethionyl-tRNA from spontaneous hydrolysis and promotes its binding to the 30S ribosomal subunits. Also involved in the hydrolysis of GTP during the formation of the 70S ribosomal complex. The chain is Translation initiation factor IF-2 from Xanthomonas oryzae pv. oryzae (strain MAFF 311018).